The primary structure comprises 137 residues: Peptide methionine sulfoxide reductase MsrB (137 aa).

A MsrB domain is found at 7–129 (AEELKKNLSE…NSASLRFTDG (123 aa)). Zn(2+)-binding residues include Cys-46, Cys-49, Cys-95, and Cys-98. Residue Cys-118 is the Nucleophile of the active site.

It belongs to the MsrB Met sulfoxide reductase family. Requires Zn(2+) as cofactor.

The catalysed reaction is L-methionyl-[protein] + [thioredoxin]-disulfide + H2O = L-methionyl-(R)-S-oxide-[protein] + [thioredoxin]-dithiol. This is Peptide methionine sulfoxide reductase MsrB from Escherichia coli (strain K12 / MC4100 / BW2952).